We begin with the raw amino-acid sequence, 364 residues long: Chorismate synthase (364 aa).

Residues Arg-48 and Arg-54 each coordinate NADP(+). FMN is bound by residues 125–127 (RSS), 238–239 (NA), Gly-278, 293–297 (KPTSS), and Arg-319.

The protein belongs to the chorismate synthase family. In terms of assembly, homotetramer. The cofactor is FMNH2.

It carries out the reaction 5-O-(1-carboxyvinyl)-3-phosphoshikimate = chorismate + phosphate. Its pathway is metabolic intermediate biosynthesis; chorismate biosynthesis; chorismate from D-erythrose 4-phosphate and phosphoenolpyruvate: step 7/7. Catalyzes the anti-1,4-elimination of the C-3 phosphate and the C-6 proR hydrogen from 5-enolpyruvylshikimate-3-phosphate (EPSP) to yield chorismate, which is the branch point compound that serves as the starting substrate for the three terminal pathways of aromatic amino acid biosynthesis. This reaction introduces a second double bond into the aromatic ring system. This Shewanella woodyi (strain ATCC 51908 / MS32) protein is Chorismate synthase.